The sequence spans 223 residues: V-type ATP synthase subunit D (223 aa).

Positions A203–L223 are disordered.

The protein belongs to the V-ATPase D subunit family.

In terms of biological role, produces ATP from ADP in the presence of a proton gradient across the membrane. This is V-type ATP synthase subunit D from Thermus thermophilus (strain ATCC BAA-163 / DSM 7039 / HB27).